The following is a 900-amino-acid chain: Methionine--tRNA ligase, cytoplasmic (900 aa).

The GST C-terminal domain maps to 74-198 (GWEQDDLTNQ…VLKQQGVLAL (125 aa)). A 'HIGH' region motif is present at residues 273-283 (PYVNNVPHLGN). The short motif at 593–597 (KFSKS) is the 'KMSKS' region element. An ATP-binding site is contributed by K596. S825 carries the post-translational modification Phosphoserine. At T835 the chain carries Phosphothreonine. One can recognise a WHEP-TRS domain in the interval 841–897 (QIQALMDEVTKQGNIVRELKAQKADKNEVAAEVAKLLDLKKQLAVAEGKPPEAPKGK).

Belongs to the class-I aminoacyl-tRNA synthetase family. Monomer. Part of a multisubunit complex that groups tRNA ligases for Arg (RARS1), Asp (DARS1), Gln (QARS1), Ile (IARS1), Leu (LARS1), Lys (KARS1), Met (MARS1) the bifunctional ligase for Glu and Pro (EPRS1) and the auxiliary subunits AIMP1/p43, AIMP2/p38 and EEF1E1/p18. Forms a linear complex that contains MARS1, EEF1E1, EPRS1 and AIMP2 that is at the core of the multisubunit complex.

It is found in the cytoplasm. The protein localises to the cytosol. It localises to the nucleus. Its subcellular location is the nucleolus. It carries out the reaction tRNA(Met) + L-methionine + ATP = L-methionyl-tRNA(Met) + AMP + diphosphate. Its activity is regulated as follows. Enzyme activity is increased by spermidine, EEF1A1, and when the Mg(2+) concentration is increased from 5 mM to 13 mM (in vitro), possibly by promoting the dissociation of the complex between the enzyme and its product. In terms of biological role, catalyzes the specific attachment of an amino acid to its cognate tRNA in a 2 step reaction: the amino acid (AA) is first activated by ATP to form AA-AMP and then transferred to the acceptor end of the tRNA. Plays a role in the synthesis of ribosomal RNA in the nucleolus. This Homo sapiens (Human) protein is Methionine--tRNA ligase, cytoplasmic.